We begin with the raw amino-acid sequence, 415 residues long: Homoserine O-acetyltransferase (415 aa).

One can recognise an AB hydrolase-1 domain in the interval 47-369; the sequence is NAVLVCHGLT…HGHDAFLVEP (323 aa). Ser-155 functions as the Nucleophile in the catalytic mechanism. Arg-226 serves as a coordination point for substrate. Residues Asp-329 and His-362 contribute to the active site. Asp-363 contacts substrate. The tract at residues 383 to 415 is disordered; sequence GVAGRAVTDTAPDGGEPDEDEDFAPVHSSLFSR.

The protein belongs to the AB hydrolase superfamily. MetX family. In terms of assembly, homodimer.

The protein localises to the cytoplasm. The enzyme catalyses L-homoserine + acetyl-CoA = O-acetyl-L-homoserine + CoA. It participates in amino-acid biosynthesis; L-methionine biosynthesis via de novo pathway; O-acetyl-L-homoserine from L-homoserine: step 1/1. In terms of biological role, transfers an acetyl group from acetyl-CoA to L-homoserine, forming acetyl-L-homoserine. This Haloferax volcanii (strain ATCC 29605 / DSM 3757 / JCM 8879 / NBRC 14742 / NCIMB 2012 / VKM B-1768 / DS2) (Halobacterium volcanii) protein is Homoserine O-acetyltransferase.